A 1061-amino-acid chain; its full sequence is Eukaryotic translation initiation factor 3 subunit A (1061 aa).

Polar residues predominate over residues 114–126 (QSSIEATTGSSSV). A disordered region spans residues 114-133 (QSSIEATTGSSSVEDLEASE). The region spanning 339–523 (LQKAATFVVL…GVLSFDVDVF (185 aa)) is the PCI domain. 2 coiled-coil regions span residues 609–724 (EVIQ…KRLD) and 789–906 (RADL…AAAA). The segment covering 828 to 901 (REKREREEKE…EAMARRRAEK (74 aa)) has biased composition (basic and acidic residues). The interval 828 to 1061 (REKREREEKE…KYVPKFRREG (234 aa)) is disordered. Pro residues-rich tracts occupy residues 950-962 (SGPP…PPPI) and 1000-1011 (APPPERSGPPPR).

The protein belongs to the eIF-3 subunit A family. Component of the eukaryotic translation initiation factor 3 (eIF-3) complex.

The protein resides in the cytoplasm. Functionally, RNA-binding component of the eukaryotic translation initiation factor 3 (eIF-3) complex, which is involved in protein synthesis of a specialized repertoire of mRNAs and, together with other initiation factors, stimulates binding of mRNA and methionyl-tRNAi to the 40S ribosome. The eIF-3 complex specifically targets and initiates translation of a subset of mRNAs involved in cell proliferation. This Chaetomium globosum (strain ATCC 6205 / CBS 148.51 / DSM 1962 / NBRC 6347 / NRRL 1970) (Soil fungus) protein is Eukaryotic translation initiation factor 3 subunit A.